A 225-amino-acid chain; its full sequence is Ribosomal RNA large subunit methyltransferase E (225 aa).

The S-adenosyl-L-methionine site is built by glycine 64, tryptophan 66, aspartate 93, aspartate 109, and aspartate 138. The active-site Proton acceptor is lysine 178.

The protein belongs to the class I-like SAM-binding methyltransferase superfamily. RNA methyltransferase RlmE family.

It is found in the cytoplasm. The enzyme catalyses uridine(2552) in 23S rRNA + S-adenosyl-L-methionine = 2'-O-methyluridine(2552) in 23S rRNA + S-adenosyl-L-homocysteine + H(+). In terms of biological role, specifically methylates the uridine in position 2552 of 23S rRNA at the 2'-O position of the ribose in the fully assembled 50S ribosomal subunit. This Cupriavidus pinatubonensis (strain JMP 134 / LMG 1197) (Cupriavidus necator (strain JMP 134)) protein is Ribosomal RNA large subunit methyltransferase E.